A 443-amino-acid polypeptide reads, in one-letter code: uncharacterized protein (443 aa).

A run of 10 helical transmembrane segments spans residues 7-29 (VSLY…MLNT), 68-87 (YISS…SIFT), 94-111 (VLSL…YAIF), 121-143 (VTLF…SMFA), 150-164 (IVII…SLTC), 179-201 (IIST…YIFF), 206-225 (LIIK…FAIS), 358-375 (IRFI…FIRN), 382-399 (LFVV…SFFG), and 409-431 (LFGM…IYKI).

Its subcellular location is the cell membrane. This is an uncharacterized protein from Escherichia coli (strain K12).